A 426-amino-acid polypeptide reads, in one-letter code: Serine/threonine-protein kinase SRPK (426 aa).

Positions 1-23 (MENIFKEKEKGKEKAKEEEKEND) are enriched in basic and acidic residues. Residues 1-40 (MENIFKEKEKGKEKAKEEEKENDSGDLFDSEDEGTEDYKK) are disordered. The span at 24 to 35 (SGDLFDSEDEGT) shows a compositional bias: acidic residues. One can recognise a Protein kinase domain in the interval 56–419 (YRIVKKLGWG…ARDSLEHPYM (364 aa)). Residues 62 to 70 (LGWGHFSTV) and Lys-86 contribute to the ATP site. Asp-188 functions as the Proton acceptor in the catalytic mechanism. Positions 318-328 (PKKGDKYDKTD) match the Nuclear localization signal motif.

The protein belongs to the protein kinase superfamily. CMGC Ser/Thr protein kinase family.

It is found in the nucleus. It carries out the reaction L-seryl-[protein] + ATP = O-phospho-L-seryl-[protein] + ADP + H(+). The enzyme catalyses L-threonyl-[protein] + ATP = O-phospho-L-threonyl-[protein] + ADP + H(+). Its function is as follows. Phosphorylates serine/arginine-rich protein PSR. In Physarum polycephalum (Slime mold), this protein is Serine/threonine-protein kinase SRPK.